Reading from the N-terminus, the 206-residue chain is Ras-related protein Ral-B (206 aa).

21 to 29 provides a ligand contact to GTP; the sequence is GSGGVGKSA. An Effector region motif is present at residues 43–51; it reads YEPTKADSY. GTP contacts are provided by residues 68-72, 128-131, and 158-160; these read DTAGQ, NKSD, and SAK. The segment at 181-206 is disordered; that stretch reads MSENKDKNGRKSGKSKKSFKERCCLL. Cysteine 203 is modified (cysteine methyl ester). Cysteine 203 is lipidated: S-geranylgeranyl cysteine. The propeptide at 204-206 is removed in mature form; it reads CLL.

The protein belongs to the small GTPase superfamily. Ras family. Interacts with EXOC2/Sec5 and EXOC8/Exo84. Interacts (via effector domain) with RALBP1. In terms of processing, prenylation is essential for membrane localization. The farnesylated form confers resistance to the proapoptotic and anti-anchorage-dependent growth effects of some geranylgeranyltransferase I inhibitors.

The protein localises to the cell membrane. It is found in the midbody. It catalyses the reaction GTP + H2O = GDP + phosphate + H(+). With respect to regulation, alternates between an inactive form bound to GDP and an active form bound to GTP. Activated by a guanine nucleotide-exchange factor (GEF) and inactivated by a GTPase-activating protein (GAP). Functionally, multifunctional GTPase involved in a variety of cellular processes including gene expression, cell migration, cell proliferation, oncogenic transformation and membrane trafficking. Accomplishes its multiple functions by interacting with distinct downstream effectors. Acts as a GTP sensor for GTP-dependent exocytosis of dense core vesicles. Required both to stabilize the assembly of the exocyst complex and to localize functional exocyst complexes to the leading edge of migrating cells. Required for suppression of apoptosis. In late stages of cytokinesis, upon completion of the bridge formation between dividing cells, mediates exocyst recruitment to the midbody to drive abscission. Involved in ligand-dependent receptor mediated endocytosis of the EGF and insulin receptors. This is Ras-related protein Ral-B (Ralb) from Rattus norvegicus (Rat).